Consider the following 119-residue polypeptide: Large ribosomal subunit protein uL24 (119 aa).

Belongs to the universal ribosomal protein uL24 family. As to quaternary structure, part of the 50S ribosomal subunit.

One of two assembly initiator proteins, it binds directly to the 5'-end of the 23S rRNA, where it nucleates assembly of the 50S subunit. Functionally, one of the proteins that surrounds the polypeptide exit tunnel on the outside of the subunit. The polypeptide is Large ribosomal subunit protein uL24 (Clavibacter michiganensis subsp. michiganensis (strain NCPPB 382)).